The sequence spans 360 residues: Protein Wnt-2 (360 aa).

The signal sequence occupies residues 1–37 (MIPRRSCWLILLLNLLNVQSLLDASWWSTVAQLSTAL). Cystine bridges form between cysteine 80–cysteine 91, cysteine 130–cysteine 138, cysteine 140–cysteine 158, cysteine 213–cysteine 227, cysteine 215–cysteine 222, cysteine 289–cysteine 320, cysteine 305–cysteine 315, cysteine 319–cysteine 359, cysteine 335–cysteine 350, cysteine 337–cysteine 347, and cysteine 342–cysteine 343. The N-linked (GlcNAc...) asparagine glycan is linked to asparagine 90. Residue serine 219 is the site of O-palmitoleoyl serine; by mom-1 attachment. N-linked (GlcNAc...) asparagine glycosylation occurs at asparagine 352.

The protein belongs to the Wnt family. Palmitoleoylation is required for efficient binding to frizzled receptors. Depalmitoleoylation leads to Wnt signaling pathway inhibition. As to expression, expressed in intestine, pharynx, anterior body wall muscle, vulva, some pharyngeal neurons and SMD head neurons. Expressed along the boundary between the intestine and muscle or hypodermis, but is also expressed in the hypodermis in cells including seam cells.

It is found in the secreted. The protein localises to the extracellular space. It localises to the extracellular matrix. Ligand for members of the frizzled family of seven transmembrane receptors. Probable developmental protein. May be a signaling molecule which affects the development of discrete regions of tissues. Is likely to signal over only few cell diameters. Involved in the correct positioning of the developing nerve ring and in axon guidance of SIA and SIB neurons, probably by binding to tyrosine kinase receptor cam-1. In addition, regulates the positioning of some head neuronal cells, muscle arms associated with the nerve ring and the excretory pore. Together with Wnt ligand cwn-1, regulates the migration of CAN, ALM, BDU and HSN neurons during embryogenesis, the migration of QL and QR neuroblast descendants during larval development, and polarity of ALM neurons. May act through the wnt receptor cfz-2 to regulate QR neuroblast descendant migration, and to direct ALM migration. Also plays a role in axon growth and guidance in HSN and male CP neurons. In addition, together with wnt ligand cwn-1, negatively regulates developmental neurite pruning of AIM neurons probably by acting as a ligand for receptor tyrosine kinase cam-1. Through the cam-1 receptor also probably regulates the outgrowth of neurites from RME GABAergic motor neurons. May act redundantly with other Wnt ligands such as cwn-1 and mom-2 to control seam cell polarity. The sequence is that of Protein Wnt-2 from Caenorhabditis elegans.